Consider the following 177-residue polypeptide: ATP synthase subunit b (177 aa).

The helical transmembrane segment at 35–55 threads the bilayer; sequence FFVVLAIFLIVLAVIGTFVVP.

The protein belongs to the ATPase B chain family. As to quaternary structure, F-type ATPases have 2 components, F(1) - the catalytic core - and F(0) - the membrane proton channel. F(1) has five subunits: alpha(3), beta(3), gamma(1), delta(1), epsilon(1). F(0) has three main subunits: a(1), b(2) and c(10-14). The alpha and beta chains form an alternating ring which encloses part of the gamma chain. F(1) is attached to F(0) by a central stalk formed by the gamma and epsilon chains, while a peripheral stalk is formed by the delta and b chains.

It is found in the cell membrane. Its function is as follows. F(1)F(0) ATP synthase produces ATP from ADP in the presence of a proton or sodium gradient. F-type ATPases consist of two structural domains, F(1) containing the extramembraneous catalytic core and F(0) containing the membrane proton channel, linked together by a central stalk and a peripheral stalk. During catalysis, ATP synthesis in the catalytic domain of F(1) is coupled via a rotary mechanism of the central stalk subunits to proton translocation. Functionally, component of the F(0) channel, it forms part of the peripheral stalk, linking F(1) to F(0). This Mycobacteroides abscessus (strain ATCC 19977 / DSM 44196 / CCUG 20993 / CIP 104536 / JCM 13569 / NCTC 13031 / TMC 1543 / L948) (Mycobacterium abscessus) protein is ATP synthase subunit b.